We begin with the raw amino-acid sequence, 68 residues long: Protein RH1 (68 aa).

This is Protein RH1 from Pantherophis guttatus (Corn snake).